The chain runs to 119 residues: C-X-C motif chemokine 17 (119 aa).

Residues 1-21 form the signal peptide; it reads MKVLISSLLLLLPLMLMSMVS. 2 disulfide bridges follow: C75–C103 and C77–C110. The interval 81-100 is disordered; the sequence is KGNVKKTRHQRHHRKPNKHS. The span at 82 to 100 shows a compositional bias: basic residues; that stretch reads GNVKKTRHQRHHRKPNKHS.

Belongs to the intercrine alpha (chemokine CxC) family. In terms of processing, likely to undergo an endoproteolytic process to form a four-cysteine-containing mature peptide with a canonical CXC chemokine scaffold after secretion. As to expression, detected in trachea, stomach, lung and skeletal muscle. Detected in intestine and in normal and asthmatic lung (at protein level). Breast tumors showed 3- to 24-fold up-regulation.

The protein localises to the secreted. Chemokine that acts as a chemoattractant for monocytes, macrophages and dendritic cells. Plays a role in angiogenesis and possibly in the development of tumors. Acts as an anti-inflammatory in the stomach. May play a role in the innate defense against infections. Activates the C-X-C chemokine receptor GPR35 to induce a rapid and transient rise in the level of intracellular calcium ions. Functionally, seems to exhibit much higher chemoattractant potency on monocytes and macrophages than 6-Cys CXCL17. The chain is C-X-C motif chemokine 17 (CXCL17) from Homo sapiens (Human).